Reading from the N-terminus, the 226-residue chain is PKHD-type hydroxylase MADE_1018490 (226 aa).

Positions arginine 77–serine 177 constitute a Fe2OG dioxygenase domain. Fe cation-binding residues include histidine 95, aspartate 97, and histidine 158. Arginine 168 is a binding site for 2-oxoglutarate.

It depends on Fe(2+) as a cofactor. L-ascorbate serves as cofactor.

The polypeptide is PKHD-type hydroxylase MADE_1018490 (Alteromonas mediterranea (strain DSM 17117 / CIP 110805 / LMG 28347 / Deep ecotype)).